Here is a 124-residue protein sequence, read N- to C-terminus: MFSFIDDIPSFEQIKARVRDDLRKHGWEKRWNDSRLVQKSRELLNDEELKIDPATWIWKRMPSREEVAARRQRDFETVWKYRYRLGGFASGALLALALAGIFSTGNFGGSSDAGNRPSVVYPIE.

The helical transmembrane segment at 85–102 (LGGFASGALLALALAGIF) threads the bilayer.

It localises to the cell inner membrane. In terms of biological role, component of the ubiquinol-cytochrome c reductase complex (complex III or cytochrome b-c1 complex), which is a respiratory chain that generates an electrochemical potential coupled to ATP synthesis. The protein is 14 kDa peptide of ubiquinol-cytochrome c2 oxidoreductase complex of Cereibacter sphaeroides (Rhodobacter sphaeroides).